Consider the following 44-residue polypeptide: Large ribosomal subunit protein bL34 (44 aa).

The protein belongs to the bacterial ribosomal protein bL34 family.

In Wolbachia sp. subsp. Brugia malayi (strain TRS), this protein is Large ribosomal subunit protein bL34.